Consider the following 403-residue polypeptide: Phosphoglycerate kinase (403 aa).

Residues 24-26 (DLN), R39, 62-65 (HLGR), R121, and R161 each bind substrate. ATP-binding positions include K211, G299, E330, and 359 to 362 (GGDS).

It belongs to the phosphoglycerate kinase family. In terms of assembly, monomer.

It is found in the cytoplasm. It carries out the reaction (2R)-3-phosphoglycerate + ATP = (2R)-3-phospho-glyceroyl phosphate + ADP. Its pathway is carbohydrate degradation; glycolysis; pyruvate from D-glyceraldehyde 3-phosphate: step 2/5. The polypeptide is Phosphoglycerate kinase (Rhodococcus opacus (strain B4)).